Consider the following 103-residue polypeptide: Pterin-4-alpha-carbinolamine dehydratase 2 (103 aa).

The protein belongs to the pterin-4-alpha-carbinolamine dehydratase family. In terms of tissue distribution, highest level found in the kidney, liver, heart and ovarian follicles.

It carries out the reaction (4aS,6R)-4a-hydroxy-L-erythro-5,6,7,8-tetrahydrobiopterin = (6R)-L-erythro-6,7-dihydrobiopterin + H2O. Its function is as follows. Involved in tetrahydrobiopterin biosynthesis. Seems to both prevent the formation of 7-pterins and accelerate the formation of quinonoid-BH2. In terms of biological role, regulates the dimerization of homeodomain protein HNF-1-alpha and enhances its transcriptional activity. This chain is Pterin-4-alpha-carbinolamine dehydratase 2 (PCBD2), found in Gallus gallus (Chicken).